The primary structure comprises 346 residues: tRNA N6-adenosine threonylcarbamoyltransferase (346 aa).

Fe cation-binding residues include His-111 and His-115. Residues Leu-134–Gly-138, Asp-167, Gly-180, and Asn-279 each bind substrate. A Fe cation-binding site is contributed by Asp-307.

Belongs to the KAE1 / TsaD family. Fe(2+) serves as cofactor.

The protein resides in the cytoplasm. It catalyses the reaction L-threonylcarbamoyladenylate + adenosine(37) in tRNA = N(6)-L-threonylcarbamoyladenosine(37) in tRNA + AMP + H(+). Functionally, required for the formation of a threonylcarbamoyl group on adenosine at position 37 (t(6)A37) in tRNAs that read codons beginning with adenine. Is involved in the transfer of the threonylcarbamoyl moiety of threonylcarbamoyl-AMP (TC-AMP) to the N6 group of A37, together with TsaE and TsaB. TsaD likely plays a direct catalytic role in this reaction. The protein is tRNA N6-adenosine threonylcarbamoyltransferase of Burkholderia thailandensis (strain ATCC 700388 / DSM 13276 / CCUG 48851 / CIP 106301 / E264).